A 262-amino-acid polypeptide reads, in one-letter code: Spindlin-1 (262 aa).

Positions 1 to 49 are disordered; sequence MKTPFGKTPGQRSRADAGHAGVSANMMKKRTSHKKHRTSVGPSKPVSQP. Residues K7 and K28 each participate in a glycyl lysine isopeptide (Lys-Gly) (interchain with G-Cter in SUMO2) cross-link. A compositionally biased stretch (basic residues) spans 27-38; that stretch reads MKKRTSHKKHRT. K44 carries the post-translational modification N6-acetyllysine; alternate. K44 is covalently cross-linked (Glycyl lysine isopeptide (Lys-Gly) (interchain with G-Cter in SUMO2); alternate). Positions 53 to 116 are tudor-like domain 1; sequence IVGCRIQHGW…RVSALEVLPD (64 aa). Residues 93 to 98 are histone H3K4me3 and H3R8me2a binding; it reads GFDCVY. 2 positions are modified to phosphoserine; by AURKA: S109 and S124. The tudor-like domain 2 stretch occupies residues 132 to 193; the sequence is MIGKAVEHMF…DYKEGDLRIM (62 aa). E142 is a region of interest (histone H3K4me3 and H3R8me2a binding). The residue at position 199 (S199) is a Phosphoserine. Residues 213 to 262 are tudor-like domain 3; it reads LVGKQVEYAKEDGSKRTGMVIHQVEAKPSVYFIKFDDDFHIYVYDLVKTS. The tract at residues 250–252 is histone H3K4me3 and H3R8me2a binding; it reads DFH.

It belongs to the SPIN/STSY family. Homodimer; may form higher-order oligomers. Interacts with TCF7L2/TCF4; the interaction is direct. Interacts with HABP4 and SERBP1. Interacts with SPINDOC; SPINDOC stabilizes SPIN1 and enhances its association with bivalent H3K4me3K9me3 mark. Interacts with SPOCD1; promoting recruitment of PIWIL4 and SPOCD1 to transposons. Phosphorylated during oocyte meiotic maturation.

It is found in the nucleus. Its subcellular location is the nucleolus. Chromatin reader that specifically recognizes and binds histone H3 both trimethylated at 'Lys-4' and 'Lys-9' (H3K4me3K9me3) and is involved in piRNA-mediated retrotransposon silencing during spermatogenesis. Plays a key role in the initiation of the PIWIL4-piRNA pathway, a pathway that directs transposon DNA methylation and silencing in the male embryonic germ cells, by promoting recruitment of DNA methylation machinery to transposons: binds young, but not old, LINE1 transposons, which are specifically marked with H3K4me3K9me3, and promotes the recruitment of PIWIL4 and SPOCD1 to transposons, leading to piRNA-directed DNA methylation. Also recognizes and binds histone H3 both trimethylated at 'Lys-4' and asymmetrically dimethylated at 'Arg-8' (H3K4me3 and H3R8me2a) and acts as an activator of Wnt signaling pathway downstream of PRMT2. Overexpression induces metaphase arrest and chromosomal instability. Overexpression induces metaphase arrest and chromosomal instability. Localizes to active rDNA loci and promotes the expression of rRNA genes. May play a role in cell-cycle regulation during the transition from gamete to embryo. Involved in oocyte meiotic resumption, a process that takes place before ovulation to resume meiosis of oocytes blocked in prophase I: may act by regulating maternal transcripts to control meiotic resumption. This is Spindlin-1 (Spin1) from Rattus norvegicus (Rat).